Consider the following 151-residue polypeptide: Aspartate carbamoyltransferase regulatory chain (151 aa).

Residues cysteine 108, cysteine 113, cysteine 138, and cysteine 141 each coordinate Zn(2+).

This sequence belongs to the PyrI family. As to quaternary structure, contains catalytic and regulatory chains. It depends on Zn(2+) as a cofactor.

Functionally, involved in allosteric regulation of aspartate carbamoyltransferase. The sequence is that of Aspartate carbamoyltransferase regulatory chain from Pyrobaculum neutrophilum (strain DSM 2338 / JCM 9278 / NBRC 100436 / V24Sta) (Thermoproteus neutrophilus).